The following is a 336-amino-acid chain: MFYDLARRFMFTRDAEWAHEFALNNLSRFANTPLSAAWSQNIVNKPVNFLGLELKNPVGLAAGLDKNAECITAFAQMGFGFVEVGTVTPRPQAGNDKPRMFRLPQSNAIINRMGFNNKGVDNLVNNVKAANYTGILGINIGKNKDTPNEQGKDDYIHCMRKVFEHASYITVNISSPNTPGLRDLQYGAALDDLLQSLKNEQLDLVAKHGKQVPMLVKIAPDLDPIQIAQVSESLLSNKIDGVIATNTTLERSMVAGQQYADEAGGLSGQPVRERATHVVSELKRLTNGQLPIIGVGGIDDVSSAKEKINAGADLVQIYTGFIYKGPQLIKSIVDSL.

Residues 62–66 (AGLDK) and threonine 86 contribute to the FMN site. Position 66 (lysine 66) interacts with substrate. A substrate-binding site is contributed by 111–115 (NRMGF). Asparagine 139 and asparagine 172 together coordinate FMN. Asparagine 172 provides a ligand contact to substrate. Residue serine 175 is the Nucleophile of the active site. Asparagine 177 is a substrate binding site. FMN is bound by residues lysine 217 and threonine 245. 246–247 (NT) provides a ligand contact to substrate. FMN-binding positions include glycine 268, glycine 297, and 318–319 (YT).

The protein belongs to the dihydroorotate dehydrogenase family. Type 2 subfamily. As to quaternary structure, monomer. FMN is required as a cofactor.

The protein resides in the cell membrane. It carries out the reaction (S)-dihydroorotate + a quinone = orotate + a quinol. It participates in pyrimidine metabolism; UMP biosynthesis via de novo pathway; orotate from (S)-dihydroorotate (quinone route): step 1/1. Functionally, catalyzes the conversion of dihydroorotate to orotate with quinone as electron acceptor. This chain is Dihydroorotate dehydrogenase (quinone), found in Pseudoalteromonas translucida (strain TAC 125).